Consider the following 397-residue polypeptide: Carbamoyl phosphate synthase small chain (397 aa).

The CPSase stretch occupies residues 1 to 204 (MKHVLRKEKT…NAKLKEKIWH (204 aa)). Positions 57, 252, and 254 each coordinate L-glutamine. The Glutamine amidotransferase type-1 domain occupies 204 to 391 (HVVVYDFGVK…IKLMKKSYNS (188 aa)). Catalysis depends on C280, which acts as the Nucleophile. Residues L281, Q284, N322, and Y325 each contribute to the L-glutamine site. Active-site residues include H364 and E366.

It belongs to the CarA family. As to quaternary structure, composed of two chains; the small (or glutamine) chain promotes the hydrolysis of glutamine to ammonia, which is used by the large (or ammonia) chain to synthesize carbamoyl phosphate. Tetramer of heterodimers (alpha,beta)4.

The catalysed reaction is hydrogencarbonate + L-glutamine + 2 ATP + H2O = carbamoyl phosphate + L-glutamate + 2 ADP + phosphate + 2 H(+). It carries out the reaction L-glutamine + H2O = L-glutamate + NH4(+). Its pathway is amino-acid biosynthesis; L-arginine biosynthesis; carbamoyl phosphate from bicarbonate: step 1/1. It participates in pyrimidine metabolism; UMP biosynthesis via de novo pathway; (S)-dihydroorotate from bicarbonate: step 1/3. In terms of biological role, small subunit of the glutamine-dependent carbamoyl phosphate synthetase (CPSase). CPSase catalyzes the formation of carbamoyl phosphate from the ammonia moiety of glutamine, carbonate, and phosphate donated by ATP, constituting the first step of 2 biosynthetic pathways, one leading to arginine and/or urea and the other to pyrimidine nucleotides. The small subunit (glutamine amidotransferase) binds and cleaves glutamine to supply the large subunit with the substrate ammonia. The sequence is that of Carbamoyl phosphate synthase small chain from Buchnera aphidicola subsp. Baizongia pistaciae (strain Bp).